A 2386-amino-acid chain; its full sequence is Protein kinase rad3 (2386 aa).

Residues 1386 to 1943 enclose the FAT domain; the sequence is TLGIVSLNCG…LWQLMATIKS (558 aa). One can recognise a PI3K/PI4K catalytic domain in the interval 2052 to 2370; that stretch reads FEDEVDIMNS…QIQELIKSAV (319 aa). A G-loop region spans residues 2058-2064; it reads IMNSLQK. The segment at 2227 to 2235 is catalytic loop; the sequence is GLGDRHGEN. The interval 2247–2271 is activation loop; that stretch reads HVDFNCLFDKGLTFEKPEKVPFRLT. An FATC domain is found at 2354–2386; that stretch reads IPLSIEGQIQELIKSAVNPKNLVEMYIGWAAYF.

The protein belongs to the PI3/PI4-kinase family. ATM subfamily. In terms of assembly, interacts with crb2 (via BRCT domain). Interacts with chk1.

It localises to the nucleus. The catalysed reaction is L-seryl-[protein] + ATP = O-phospho-L-seryl-[protein] + ADP + H(+). It catalyses the reaction L-threonyl-[protein] + ATP = O-phospho-L-threonyl-[protein] + ADP + H(+). Its function is as follows. Serine/threonine kinase which activates checkpoint signaling upon genotoxic stresses. Involved in G2 arrest following DNA damage where it phosphorylates chk1. Phosphorylation of 'Thr-73' and 'Ser-80' of checkpoint mediator crb2 promotes its interaction with chk1. It is also involved in the dependence of mitosis on the completion of DNA replication. The sequence is that of Protein kinase rad3 (rad3) from Schizosaccharomyces pombe (strain 972 / ATCC 24843) (Fission yeast).